A 4543-amino-acid polypeptide reads, in one-letter code: Low-density lipoprotein receptor-related protein 1 (4543 aa).

A signal peptide spans 1-21 (MGPLLALAGCLLALLAAPAAR). The Extracellular segment spans residues 22 to 4419 (ALEAPKTCSP…EFIVGEQQSG (4398 aa)). LDL-receptor class A domains lie at 27–68 (KTCS…ICPQ) and 72–112 (SRCQ…HCRE). 6 disulfide bridges follow: cysteine 29–cysteine 42, cysteine 36–cysteine 55, cysteine 49–cysteine 66, cysteine 74–cysteine 87, cysteine 81–cysteine 100, and cysteine 94–cysteine 110. The region spanning 113–151 (QLANCTALGCQHHCVPTLSGPACYCNNSFQLAEDRRSCK) is the EGF-like 1 domain. An N-linked (GlcNAc...) asparagine glycan is attached at asparagine 116. 6 disulfide bridges follow: cysteine 117/cysteine 126, cysteine 122/cysteine 135, cysteine 137/cysteine 150, cysteine 156/cysteine 166, cysteine 162/cysteine 175, and cysteine 177/cysteine 190. Asparagine 138 is a glycosylation site (N-linked (GlcNAc...) asparagine). Residues 152-191 (DFDECTVYGTCSQTCTNTEGSYTCSCVEGYLLQPDNRSCK) form the EGF-like 2; calcium-binding domain. N-linked (GlcNAc...) asparagine glycans are attached at residues asparagine 187 and asparagine 276. LDL-receptor class B repeat units lie at residues 294–336 (GNFY…DPAM), 337–380 (GKVF…DLVS), and 381–424 (RLVY…FENY). Asparagine 359 is a glycosylation site (N-linked (GlcNAc...) asparagine). Asparagine 448 is a glycosylation site (N-linked (GlcNAc...) asparagine). One can recognise an EGF-like 3 domain in the interval 476-522 (RSHACEPDQFGKPGGCSDICLLGNSHKSRTCRCRSGFSLGSDGKSCK). 3 disulfides stabilise this stretch: cysteine 480-cysteine 495, cysteine 491-cysteine 506, and cysteine 508-cysteine 521. 4 LDL-receptor class B repeats span residues 573-615 (GFIY…DWMG), 616-661 (NNLY…DPLN), 662-712 (GWMY…DIPA), and 713-756 (KILY…YSSF). Asparagine 731 is a glycosylation site (N-linked (GlcNAc...) asparagine). The EGF-like 4 domain occupies 801 to 841 (GSNKCRVNNGGCSSLCLATPRGRQCACAEDQILGADSVTCE). 33 cysteine pairs are disulfide-bonded: cysteine 805–cysteine 816, cysteine 812–cysteine 825, cysteine 827–cysteine 840, cysteine 852–cysteine 864, cysteine 859–cysteine 877, cysteine 871–cysteine 888, cysteine 893–cysteine 905, cysteine 900–cysteine 918, cysteine 912–cysteine 929, cysteine 934–cysteine 946, cysteine 941–cysteine 959, cysteine 953–cysteine 969, cysteine 974–cysteine 987, cysteine 982–cysteine 1000, cysteine 994–cysteine 1009, cysteine 1013–cysteine 1025, cysteine 1020–cysteine 1038, cysteine 1032–cysteine 1049, cysteine 1060–cysteine 1073, cysteine 1067–cysteine 1086, cysteine 1080–cysteine 1095, cysteine 1102–cysteine 1116, cysteine 1110–cysteine 1129, cysteine 1123–cysteine 1138, cysteine 1143–cysteine 1157, cysteine 1150–cysteine 1170, cysteine 1164–cysteine 1180, cysteine 1183–cysteine 1194, cysteine 1190–cysteine 1204, cysteine 1206–cysteine 1219, cysteine 1225–cysteine 1235, cysteine 1231–cysteine 1244, and cysteine 1246–cysteine 1259. LDL-receptor class A domains follow at residues 850–890 (PQCQ…LCHQ), 891–931 (HTCP…TCSA), 932–971 (RTCS…SCAY), 972–1011 (PTCF…GCSH), 1011–1051 (HSCS…NCTN), 1058–1097 (GGCH…NCEG), 1100–1140 (HVCD…NCES), and 1141–1180 (LVCK…GELC). Ca(2+)-binding residues include tryptophan 869, aspartate 872, aspartate 874, aspartate 876, aspartate 882, and glutamate 883. N-linked (GlcNAc...) asparagine glycosylation occurs at asparagine 926. Tryptophan 1030, aspartate 1033, aspartate 1035, aspartate 1037, aspartate 1043, and glutamate 1044 together coordinate Ca(2+). Asparagine 1048 carries N-linked (GlcNAc...) asparagine glycosylation. Ca(2+) is bound by residues tryptophan 1078, aspartate 1081, aspartate 1083, aspartate 1085, aspartate 1091, and glutamate 1092. 2 N-linked (GlcNAc...) asparagine glycosylation sites follow: asparagine 1152 and asparagine 1153. 2 EGF-like domains span residues 1181 to 1220 (DQCS…KTCQ) and 1221 to 1260 (IQSY…ESCR). Asparagine 1193 and asparagine 1216 each carry an N-linked (GlcNAc...) asparagine glycan. Asparagine 1305 carries N-linked (GlcNAc...) asparagine glycosylation. LDL-receptor class B repeat units follow at residues 1307 to 1353 (SSLY…DWIA), 1354 to 1396 (GNIY…DPRY), 1397 to 1443 (GILF…DYLE), 1444 to 1488 (KRIL…YGGE), and 1489 to 1529 (VYWT…YHPS). Asparagine 1509 carries an N-linked (GlcNAc...) asparagine glycan. Residues 1534 to 1577 (APNPCEANGGKGPCSHLCLINYNRTLSCACPHLMKLDKDNTTCY) form the EGF-like 7 domain. Disulfide bonds link cysteine 1538–cysteine 1551, cysteine 1547–cysteine 1561, and cysteine 1563–cysteine 1576. Residues asparagine 1556, asparagine 1573, asparagine 1614, and asparagine 1643 are each glycosylated (N-linked (GlcNAc...) asparagine). LDL-receptor class B repeat units follow at residues 1625–1667 (QRIY…DWVS), 1668–1711 (RNLF…HPLH), 1712–1751 (GKLY…DYPE), and 1752–1796 (SKLY…MGDK). Residues asparagine 1721, asparagine 1731, asparagine 1761, and asparagine 1823 are each glycosylated (N-linked (GlcNAc...) asparagine). One can recognise an EGF-like 8 domain in the interval 1842–1883 (GSNPCSVNNGDCSQLCLPTSETSRSCMCTAGYSLKSGQQSCE). Intrachain disulfides connect cysteine 1846–cysteine 1857, cysteine 1853–cysteine 1867, and cysteine 1869–cysteine 1882. The N-linked (GlcNAc...) asparagine glycan is linked to asparagine 1929. LDL-receptor class B repeat units lie at residues 1930–1972 (DTIY…DWIA), 1973–2015 (GNIY…HPEK), 2016–2059 (GYLF…DYED), and 2060–2103 (GKLY…FEDY). Residues asparagine 1991 and asparagine 2044 are each glycosylated (N-linked (GlcNAc...) asparagine). N-linked (GlcNAc...) asparagine glycans are attached at residues asparagine 2113 and asparagine 2123. Residues 2151–2191 (GTNVCAQNNGGCQQLCLFRGGGRRTCACAHGMLSEDGVSCR) enclose the EGF-like 9 domain. 3 disulfide bridges follow: cysteine 2155–cysteine 2166, cysteine 2162–cysteine 2176, and cysteine 2178–cysteine 2190. 5 LDL-receptor class B repeats span residues 2247-2288 (NRIF…HRGW), 2289-2337 (DTLY…DECQ), 2338-2382 (NLMF…DHRA), 2383-2425 (EKIY…YGDY), and 2426-2467 (IFWT…VAND). N-linked (GlcNAc...) asparagine glycosylation is present at asparagine 2466. An EGF-like 10 domain is found at 2472 to 2512 (ELSPCRVNNGGCQDLCLLTPKGHVNCSCRGERVLQEDFTCK). Intrachain disulfides connect cysteine 2476–cysteine 2487, cysteine 2483–cysteine 2497, and cysteine 2499–cysteine 2511. An N-linked (GlcNAc...) asparagine glycan is attached at asparagine 2496. Residue asparagine 2515 is glycosylated (N-linked (GlcNAc...) asparagine). LDL-receptor class A domains are found at residues 2516–2557 (STCN…YCSS), 2558–2596 (RKCK…PCNK), 2597–2635 (TSCA…NCTA), 2636–2684 (TDCS…NCPG), 2688–2730 (PKCP…RQDK), 2730–2769 (KFCY…RCRL), and 2770–2812 (TTCS…GCLY). 6 disulfides stabilise this stretch: cysteine 2518–cysteine 2531, cysteine 2526–cysteine 2544, cysteine 2538–cysteine 2555, cysteine 2560–cysteine 2572, cysteine 2567–cysteine 2585, and cysteine 2579–cysteine 2594. An N-linked (GlcNAc...) asparagine glycan is attached at asparagine 2595. Intrachain disulfides connect cysteine 2599-cysteine 2611, cysteine 2606-cysteine 2624, cysteine 2618-cysteine 2633, cysteine 2638-cysteine 2660, cysteine 2654-cysteine 2673, cysteine 2667-cysteine 2682, cysteine 2690-cysteine 2702, cysteine 2697-cysteine 2715, cysteine 2709-cysteine 2724, cysteine 2732-cysteine 2744, cysteine 2739-cysteine 2757, cysteine 2751-cysteine 2767, cysteine 2772-cysteine 2785, cysteine 2779-cysteine 2798, and cysteine 2792-cysteine 2810. N-linked (GlcNAc...) asparagine glycans are attached at residues asparagine 2614 and asparagine 2632. A glycan (N-linked (GlcNAc...) asparagine) is linked at asparagine 2813. 3 LDL-receptor class A domains span residues 2814–2853 (NTCD…ECEY), 2854–2897 (PTCG…RCSS), and 2900–2938 (SKCN…NCFI). 15 disulfide bridges follow: cysteine 2816/cysteine 2828, cysteine 2823/cysteine 2841, cysteine 2835/cysteine 2851, cysteine 2856/cysteine 2868, cysteine 2863/cysteine 2882, cysteine 2876/cysteine 2895, cysteine 2902/cysteine 2914, cysteine 2909/cysteine 2927, cysteine 2921/cysteine 2936, cysteine 2941/cysteine 2953, cysteine 2949/cysteine 2962, cysteine 2964/cysteine 2977, cysteine 2983/cysteine 2993, cysteine 2989/cysteine 3002, and cysteine 3004/cysteine 3018. N-linked (GlcNAc...) asparagine glycosylation occurs at asparagine 2903. In terms of domain architecture, EGF-like 11 spans 2939–2978 (NECLNKKLSGCSQECEDLKIGYKCRCRPGFRLKDDGKTCI). Residues 2979–3019 (DIDECSTTYPCSQKCINTLGSYKCLCIEGYKLKPDNPTSCK) form the EGF-like 12; calcium-binding domain. N-linked (GlcNAc...) asparagine glycans are attached at residues asparagine 3045 and asparagine 3086. LDL-receptor class B repeat units follow at residues 3066–3110 (QMIY…DWVG), 3111–3153 (GNLY…DVQN), 3154–3197 (GYLY…DYIN), 3198–3240 (SRIY…FEDY), and 3241–3281 (IYWT…YHPY). Asparagine 3176 is a glycosylation site (N-linked (GlcNAc...) asparagine). N-linked (GlcNAc...) asparagine glycosylation is present at asparagine 3261. The EGF-like 13 domain maps to 3287–3328 (PNHPCKTNNAGCSNLCLLSPGGGHKCACPTNFYLGSDGKTCV). Disulfide bonds link cysteine 3291–cysteine 3302, cysteine 3298–cysteine 3312, and cysteine 3314–cysteine 3327. 11 LDL-receptor class A domains span residues 3329-3368 (SNCT…DCPE), 3369-3407 (FKCR…NCDI), 3408-3447 (HVCL…DCPE), 3448-3488 (VTCA…NCTQ), 3489-3530 (MTCG…ECDE), 3531-3569 (RTCE…SCTP), 3570-3608 (RPCS…DCIP), 3608-3646 (PRCE…DCGT), 3649-3689 (RTCP…ECLK), 3690-3730 (FQCP…DCES), and 3736-3776 (KSCS…SCSH). Asparagine 3330 carries an N-linked (GlcNAc...) asparagine glycan. Cystine bridges form between cysteine 3331–cysteine 3343, cysteine 3338–cysteine 3356, cysteine 3350–cysteine 3366, cysteine 3371–cysteine 3383, cysteine 3378–cysteine 3396, cysteine 3390–cysteine 3405, cysteine 3410–cysteine 3423, cysteine 3417–cysteine 3436, cysteine 3430–cysteine 3445, cysteine 3450–cysteine 3463, cysteine 3457–cysteine 3476, cysteine 3470–cysteine 3486, cysteine 3491–cysteine 3504, cysteine 3498–cysteine 3517, cysteine 3511–cysteine 3528, cysteine 3533–cysteine 3545, cysteine 3540–cysteine 3558, cysteine 3552–cysteine 3567, cysteine 3572–cysteine 3584, cysteine 3579–cysteine 3597, cysteine 3591–cysteine 3606, cysteine 3610–cysteine 3622, cysteine 3617–cysteine 3635, cysteine 3629–cysteine 3644, cysteine 3658–cysteine 3676, cysteine 3670–cysteine 3687, cysteine 3692–cysteine 3706, cysteine 3700–cysteine 3719, cysteine 3713–cysteine 3728, cysteine 3738–cysteine 3752, cysteine 3747–cysteine 3765, cysteine 3759–cysteine 3774, cysteine 3783–cysteine 3796, cysteine 3790–cysteine 3805, cysteine 3807–cysteine 3820, cysteine 3826–cysteine 3836, cysteine 3832–cysteine 3845, and cysteine 3847–cysteine 3858. Asparagine 3485 carries an N-linked (GlcNAc...) asparagine glycan. Residue asparagine 3659 is glycosylated (N-linked (GlcNAc...) asparagine). 2 EGF-like domains span residues 3779–3821 (KSYD…NSCQ) and 3822–3859 (DVNE…NMCK). Residue asparagine 3786 is glycosylated (N-linked (GlcNAc...) asparagine). Asparagine 3837 carries an N-linked (GlcNAc...) asparagine glycan. LDL-receptor class B repeat units follow at residues 3910-3952 (NKIY…THLN), 3969-4011 (GNIY…DPLR), 4012-4055 (GTMY…DYHN), and 4056-4100 (ERLY…FEDY). The Recognition site for proteolytical processing signature appears at 3939–3942 (RNRR). Asparagine 3952 is a glycosylation site (N-linked (GlcNAc...) asparagine). 2 N-linked (GlcNAc...) asparagine glycosylation sites follow: asparagine 4074 and asparagine 4124. EGF-like domains lie at 4146 to 4182 (VTNP…GTCV), 4195 to 4231 (TTDT…ERCQ), 4231 to 4267 (QINQ…SRCD), 4267 to 4303 (DQQV…DRCQ), 4303 to 4339 (QYQQ…AQCQ), 4339 to 4374 (QDNK…PSCL), and 4372 to 4409 (SCLT…MRCE). 21 disulfides stabilise this stretch: cysteine 4150-cysteine 4159, cysteine 4155-cysteine 4168, cysteine 4170-cysteine 4181, cysteine 4199-cysteine 4209, cysteine 4203-cysteine 4219, cysteine 4221-cysteine 4230, cysteine 4235-cysteine 4245, cysteine 4239-cysteine 4255, cysteine 4257-cysteine 4266, cysteine 4271-cysteine 4281, cysteine 4275-cysteine 4291, cysteine 4293-cysteine 4302, cysteine 4307-cysteine 4317, cysteine 4311-cysteine 4327, cysteine 4329-cysteine 4338, cysteine 4343-cysteine 4351, cysteine 4346-cysteine 4362, cysteine 4364-cysteine 4373, cysteine 4376-cysteine 4386, cysteine 4380-cysteine 4397, and cysteine 4399-cysteine 4408. N-linked (GlcNAc...) asparagine glycosylation occurs at asparagine 4178. Asparagine 4278 carries an N-linked (GlcNAc...) asparagine glycan. The chain crosses the membrane as a helical span at residues 4420–4443 (RTASIVIPILLLLLLLAVVAFAWY). Residues 4444–4543 (KWRIKGAKGF…ADDDLTDPLA (100 aa)) lie on the Cytoplasmic side of the membrane. The NPXY motif signature appears at 4501–4506 (FTNPVY). The tract at residues 4522–4543 (STDEKRELLARGADDDLTDPLA) is disordered. Residues 4523–4535 (TDEKRELLARGAD) show a composition bias toward basic and acidic residues.

Belongs to the LDLR family. Binds vitellogenin and LRPAP1 (alpha 2-macroglobulin). In terms of processing, cleaved into a 85 kDa membrane-spanning subunit (LRP-85) and a 515 kDa large extracellular domain (LRP-515) that remains non-covalently associated. In terms of tissue distribution, somatic.

The protein resides in the membrane. It is found in the coated pit. Endocytic receptor involved in endocytosis and in phagocytosis of apoptotic cells. Involved in cellular lipid homeostasis. Involved in the plasma clearance of chylomicron remnants and activated LRPAP1 (alpha 2-macroglobulin), as well as the local metabolism of complexes between plasminogen activators and their endogenous inhibitors. Acts as an alpha-2-macroglobulin receptor. The polypeptide is Low-density lipoprotein receptor-related protein 1 (LRP1) (Gallus gallus (Chicken)).